The following is a 327-amino-acid chain: 2-keto-3-deoxygluconate permease (327 aa).

The next 10 helical transmembrane spans lie at 10–30, 42–62, 73–93, 95–115, 139–159, 163–183, 199–219, 224–244, 254–274, and 289–309; these read IPGG…TFSP, GMIT…GASI, KSGT…AIAS, IIPE…LALV, AGAF…IILG, IASF…VGFA, VQTL…LTVI, LLGI…LIIA, TAGI…VLIA, and SLVA…TSIW.

The protein belongs to the KdgT transporter family.

It is found in the cell inner membrane. It catalyses the reaction 2-dehydro-3-deoxy-D-gluconate(in) + H(+)(in) = 2-dehydro-3-deoxy-D-gluconate(out) + H(+)(out). In terms of biological role, catalyzes the proton-dependent uptake of 2-keto-3-deoxygluconate (KDG) into the cell. The protein is 2-keto-3-deoxygluconate permease of Escherichia coli O127:H6 (strain E2348/69 / EPEC).